The sequence spans 200 residues: Holliday junction branch migration complex subunit RuvA (200 aa).

The interval 1–65 (MYEYIKGTLT…ETEHVLYGFS (65 aa)) is domain I. A domain II region spans residues 66-144 (SRAEKECFRL…TLMPLYLEEP (79 aa)). The interval 145-149 (VVPSS) is flexible linker. The interval 150-200 (TANSSFKEGIGALMNLGFSRLAADRMMTEAVKELSEEASVAELLPIALRKS) is domain III.

This sequence belongs to the RuvA family. As to quaternary structure, homotetramer. Forms an RuvA(8)-RuvB(12)-Holliday junction (HJ) complex. HJ DNA is sandwiched between 2 RuvA tetramers; dsDNA enters through RuvA and exits via RuvB. An RuvB hexamer assembles on each DNA strand where it exits the tetramer. Each RuvB hexamer is contacted by two RuvA subunits (via domain III) on 2 adjacent RuvB subunits; this complex drives branch migration. In the full resolvosome a probable DNA-RuvA(4)-RuvB(12)-RuvC(2) complex forms which resolves the HJ.

Its subcellular location is the cytoplasm. The RuvA-RuvB-RuvC complex processes Holliday junction (HJ) DNA during genetic recombination and DNA repair, while the RuvA-RuvB complex plays an important role in the rescue of blocked DNA replication forks via replication fork reversal (RFR). RuvA specifically binds to HJ cruciform DNA, conferring on it an open structure. The RuvB hexamer acts as an ATP-dependent pump, pulling dsDNA into and through the RuvAB complex. HJ branch migration allows RuvC to scan DNA until it finds its consensus sequence, where it cleaves and resolves the cruciform DNA. The chain is Holliday junction branch migration complex subunit RuvA from Chlamydia trachomatis serovar A (strain ATCC VR-571B / DSM 19440 / HAR-13).